Consider the following 1499-residue polypeptide: Streptococcal surface protein B (1499 aa).

The first 37 residues, 1–37 (MQKREVFGFRKSKVAKTLCGAVLGAALIAIADQQVLA), serve as a signal peptide directing secretion. The disordered stretch occupies residues 50–84 (AVTTTGNPATNLPEAQGEATEAASQSQAQAGSKDG). Ag I/II A repeat units lie at residues 145 to 219 (KKTT…QKAN), 220 to 301 (EDSQ…KKAK), 302 to 383 (EDND…KQAN), and 384 to 465 (ATNE…KKDF). Disordered regions lie at residues 689–709 (YADS…SEWD), 763–907 (TAPT…TPPV), and 1409–1472 (RTTT…TGTN). Residues 694–705 (NAEKSRGARWDT) show a composition bias toward basic and acidic residues. Positions 789 to 799 (PTPPVKTPDQP) are enriched in pro residues. Residues 800 to 815 (EPSKPEEPTYETEKPL) are compositionally biased toward basic and acidic residues. Over residues 828–838 (PTPPVKIPDQP) the composition is skewed to pro residues. Basic and acidic residues predominate over residues 839–854 (EPSKPEEPTYETEKPL). Composition is skewed to pro residues over residues 867–877 (PTPPVKTPDQP) and 888–907 (DPLP…TPPV). Over residues 1428–1450 (KPKDPDKPETPKEPKVPSPKVED) the composition is skewed to basic and acidic residues. The LPXTG sorting signal signature appears at 1466–1470 (LPKTG). A Pentaglycyl murein peptidoglycan amidated threonine modification is found at Thr1469. The propeptide at 1470–1499 (GTNDATYMPYLGLAALVGFLGLGLAKRKED) is removed by sortase.

It belongs to the antigen I/II family.

Its subcellular location is the secreted. It is found in the cell wall. The protein localises to the cell surface. Adhesin that mediates binding of bacteria to a variety of host cells. Plays a role in the bacterial invasion of dentinal tubules. A host immunostimulatory component, it modulates the innate immunity response. Plays a protective role against some antibiotics and cationic antimicrobial peptides (histatin-5, HTN3, but not beta-defensin 4A, DEFB4A). The chain is Streptococcal surface protein B from Streptococcus gordonii (strain Challis / ATCC 35105 / BCRC 15272 / CH1 / DL1 / V288).